The chain runs to 131 residues: Large ribosomal subunit protein bL17 (131 aa).

Belongs to the bacterial ribosomal protein bL17 family. In terms of assembly, part of the 50S ribosomal subunit. Contacts protein L32.

The sequence is that of Large ribosomal subunit protein bL17 from Shewanella oneidensis (strain ATCC 700550 / JCM 31522 / CIP 106686 / LMG 19005 / NCIMB 14063 / MR-1).